The primary structure comprises 103 residues: Integration host factor subunit beta (103 aa).

The segment at 59-82 is disordered; sequence RLGRNPKTGESVALPGKHVPHFKP.

The protein belongs to the bacterial histone-like protein family. Heterodimer of an alpha and a beta chain.

Its function is as follows. This protein is one of the two subunits of integration host factor, a specific DNA-binding protein that functions in genetic recombination as well as in transcriptional and translational control. The protein is Integration host factor subunit beta of Xanthomonas oryzae pv. oryzae (strain MAFF 311018).